A 352-amino-acid chain; its full sequence is MTIAIGTYQEKRTWFDDADDWLRQDRFVFVGWSGLLLFPCAYFALGGWLTGTTFVTSWYTHGLATSYLEGCNFLTAAVSTPANSMAHSLLFVWGPEAQGDFTRWCQLGGLWAFVALHGAFGLIGFMLRQFEIARSVNLRPYNAIAFSAPIAVFVSVFLIYPLGQSGWFFAPSFGVAAIFRFILFFQGFHNWTLNPFHMMGVAGVLGAALLCAIHGATVENTLFEDGDGANTFRAFNPTQAEETYSMVTANRFWSQIFGVAFSNKRWLHFFMLLVPVTGLWMSAIGVVGLALNLRAYDFVSQEIRAAEDPEFETFYTKNILLNEGIRAWMAAQDQPHERLVFPEEVLPRGNAL.

N-acetylthreonine is present on Thr2. Thr2 bears the Phosphothreonine mark. Residues 40–60 form a helical membrane-spanning segment; it reads CAYFALGGWLTGTTFVTSWYT. Chlorophyll a is bound at residue His117. The helical transmembrane segment at 124–140 threads the bilayer; sequence GFMLRQFEIARSVNLRP. Pheophytin a is bound by residues Gln129 and Asn142. Residues 152 to 165 traverse the membrane as a helical segment; the sequence is VFVSVFLIYPLGQS. His197 is a chlorophyll a binding site. Residues 207–227 form a helical membrane-spanning segment; sequence AALLCAIHGATVENTLFEDGD. Residues His214 and Phe261 each coordinate a plastoquinone. A Fe cation-binding site is contributed by His214. Fe cation is bound at residue His268. A helical membrane pass occupies residues 278 to 294; that stretch reads GLWMSAIGVVGLALNLR.

This sequence belongs to the reaction center PufL/M/PsbA/D family. PSII is composed of 1 copy each of membrane proteins PsbA, PsbB, PsbC, PsbD, PsbE, PsbF, PsbH, PsbI, PsbJ, PsbK, PsbL, PsbM, PsbT, PsbX, PsbY, PsbZ, Psb30/Ycf12, at least 3 peripheral proteins of the oxygen-evolving complex and a large number of cofactors. It forms dimeric complexes. The cofactor is The D1/D2 heterodimer binds P680, chlorophylls that are the primary electron donor of PSII, and subsequent electron acceptors. It shares a non-heme iron and each subunit binds pheophytin, quinone, additional chlorophylls, carotenoids and lipids. There is also a Cl(-1) ion associated with D1 and D2, which is required for oxygen evolution. The PSII complex binds additional chlorophylls, carotenoids and specific lipids.. Phosphorylated in vitro.

The protein resides in the plastid. It is found in the chloroplast thylakoid membrane. It catalyses the reaction 2 a plastoquinone + 4 hnu + 2 H2O = 2 a plastoquinol + O2. Functionally, photosystem II (PSII) is a light-driven water:plastoquinone oxidoreductase that uses light energy to abstract electrons from H(2)O, generating O(2) and a proton gradient subsequently used for ATP formation. It consists of a core antenna complex that captures photons, and an electron transfer chain that converts photonic excitation into a charge separation. The D1/D2 (PsbA/PsbD) reaction center heterodimer binds P680, the primary electron donor of PSII as well as several subsequent electron acceptors. D2 is needed for assembly of a stable PSII complex. This chain is Photosystem II D2 protein, found in Chlamydomonas reinhardtii (Chlamydomonas smithii).